The chain runs to 470 residues: MNRRLLVRSISCFQPLSRITFGRPNTPFLRKYADTSTAANTNSTILRKQLLSLKPISASDSLFISCTVFNSKGNIISMSEKFPKWSFLTEHSLFPRDLRKIDNSSIDIIPTIMCKPNCIVINLLHIKALIERDKVYVFDTTNPSAAAKLSVLMYDLESKLSSTKNNSQFYEHRALESIFINVMSALETDFKLHSQICIQILNDLENEVNRLKLRHLLIKSKDLTLFYQKTLLIRDLLDELLENDDDLANMYLTVKKSPKDNFSDLEMLIETYYTQCDEYVQQSESLIQDIKSTEEIVNIILDANRNSLMLLELKVTIYTLGFTVASVLPAFYGMNLKNFIEESEWGFTSVAVFSIVSALYITKKNFNSLRSVTKMTMYPNSPANSSVYPKTSASIALTNKLKRRRKWWKSTKQRLGVLLYGSSYTNKANLSNNKINKGFSKVKKFNMENDIKNKQNRDMIWKWLIEDKKN.

The N-terminal 32 residues, 1–32 (MNRRLLVRSISCFQPLSRITFGRPNTPFLRKY), are a transit peptide targeting the mitochondrion. Residues 33 to 314 (ADTSTAANTN…RNSLMLLELK (282 aa)) are Mitochondrial matrix-facing. The chain crosses the membrane as a helical span at residues 315-333 (VTIYTLGFTVASVLPAFYG). A YGMN motif is present at residues 332–335 (YGMN). At 334 to 344 (MNLKNFIEESE) the chain is on the mitochondrial intermembrane side. A helical membrane pass occupies residues 345–361 (WGFTSVAVFSIVSALYI). Topologically, residues 362 to 470 (TKKNFNSLRS…WKWLIEDKKN (109 aa)) are mitochondrial matrix.

It belongs to the CorA metal ion transporter (MIT) (TC 1.A.35) family. Homopentamer. Forms homooligomers. Interacts with MFM1.

The protein resides in the mitochondrion inner membrane. Functionally, high-conductance magnesium-selective channel that mediates the influx of magnesium into the mitochondrial matrix. Essential for the splicing of mRNA group II introns in mitochondria by affecting mitochondrial magnesium concentrations, which are critical for group II intron splicing. It also suppresses a variety of mitochondrial intron mutations and its absence may disturb the assembly of mitochondrial membrane complexes. This chain is Magnesium transporter MRS2, mitochondrial (MRS2), found in Saccharomyces cerevisiae (strain ATCC 204508 / S288c) (Baker's yeast).